Reading from the N-terminus, the 277-residue chain is Release factor glutamine methyltransferase (277 aa).

Residues 117-121 (GTGTG), Asp-140, Trp-168, and Asn-183 contribute to the S-adenosyl-L-methionine site. A substrate-binding site is contributed by 183-186 (NPPY).

The protein belongs to the protein N5-glutamine methyltransferase family. PrmC subfamily.

It carries out the reaction L-glutaminyl-[peptide chain release factor] + S-adenosyl-L-methionine = N(5)-methyl-L-glutaminyl-[peptide chain release factor] + S-adenosyl-L-homocysteine + H(+). In terms of biological role, methylates the class 1 translation termination release factors RF1/PrfA and RF2/PrfB on the glutamine residue of the universally conserved GGQ motif. This Salmonella typhimurium (strain LT2 / SGSC1412 / ATCC 700720) protein is Release factor glutamine methyltransferase.